Here is a 259-residue protein sequence, read N- to C-terminus: MNSHNITNESLALALMLVVVAILISHKEKLALEKDILWSVGRAIIQLIIVGYVLKYIFSVDDASLTLLMVLFICFNAAWNAQKRSKYIAKAFISSFIAITVGAGITLAVLILSGSIEFIPMQVIPIAGMIAGNAMVAVGLCYNNLGQRVISEQQQIQEKLSLGATPKQASAILIRDSIRAALIPTVDSAKTVGLVSLPGMMSGLIFAGIDPVKAIKYQIMVTFMLLSTASLSTIIACYLTYRKFYNSRHQLVVTQLKKK.

Residues 1–5 (MNSHN) are Periplasmic-facing. A helical membrane pass occupies residues 6 to 26 (ITNESLALALMLVVVAILISH). The Cytoplasmic portion of the chain corresponds to 27–35 (KEKLALEKD). Transmembrane regions (helical) follow at residues 36–56 (ILWS…VLKY) and 57–77 (IFSV…CFNA). Over 78–91 (AWNAQKRSKYIAKA) the chain is Cytoplasmic. Residues 92–112 (FISSFIAITVGAGITLAVLIL) traverse the membrane as a helical segment. Residues 113 to 117 (SGSIE) are Periplasmic-facing. Residues 118–138 (FIPMQVIPIAGMIAGNAMVAV) form a helical membrane-spanning segment. Topologically, residues 139–191 (GLCYNNLGQRVISEQQQIQEKLSLGATPKQASAILIRDSIRAALIPTVDSAKT) are cytoplasmic. Residues 192-212 (VGLVSLPGMMSGLIFAGIDPV) traverse the membrane as a helical segment. The Periplasmic segment spans residues 213–218 (KAIKYQ). A helical transmembrane segment spans residues 219-239 (IMVTFMLLSTASLSTIIACYL). The Cytoplasmic segment spans residues 240–259 (TYRKFYNSRHQLVVTQLKKK).

It belongs to the UPF0014 family. The complex is composed of two ATP-binding proteins (FetA) and two transmembrane proteins (FetB).

The protein resides in the cell inner membrane. In terms of biological role, part of the ABC transporter complex FetAB, which is probably involved in iron export and enhances resistance to H(2)O(2)-mediated oxidative stress. Probably responsible for the translocation of the substrate across the membrane. In Escherichia coli (strain K12), this protein is Probable iron export permease protein FetB (fetB).